The chain runs to 407 residues: Odorant receptor 67a (407 aa).

Topologically, residues 1–40 (MDNVAEMPEEKYVEVDDFLRLAVKFYNTLGIDPYETGRKR) are cytoplasmic. Residues 41–61 (TIWFQIYFALNMFNMVFSFYA) traverse the membrane as a helical segment. Residues 62–79 (EVATLVDRLRDNENFLES) lie on the Extracellular side of the membrane. The chain crosses the membrane as a helical span at residues 80–100 (CILLSYVSFVVMGLSKIGAVM). Residues 101 to 144 (KKKPKMTALVRQLETCFPSPSAKVQEEYAVKSWLKRCHIYTKGF) lie on the Cytoplasmic side of the membrane. The helical transmembrane segment at 145-165 (GGLFMIMYFAHALIPLFIYFI) threads the bilayer. Topologically, residues 166–208 (QRVLLHYPDAKQIMPFYQLEPWEFRDSWLFYPSYFHQSSAGYT) are extracellular. Residues 209 to 229 (ATCGSIAGDLMIFAVVLQVIM) form a helical membrane-spanning segment. The Cytoplasmic portion of the chain corresponds to 230-278 (HYERLAKVLREFKIQAHNAPNGAKEDIRKLQSLVANHIDILRLTDLMNE). A helical transmembrane segment spans residues 279–300 (VFGIPLLLNFIASALLVCLVGV). Residues 301–314 (QLTIALSPEYFCKQ) are Extracellular-facing. Residues 315–331 (MLFLISVLLEVYLLCSF) traverse the membrane as a helical segment. The Cytoplasmic portion of the chain corresponds to 332 to 378 (SQRLIDASENVGHAAYDMDWLGSDKRFKKILIFISMRSQKPVCLKAT). Residues 379-401 (VVLDLSMPTMSIFLGMSYKFFCA) form a helical membrane-spanning segment. The Extracellular portion of the chain corresponds to 402-407 (VRTMYQ).

This sequence belongs to the insect chemoreceptor superfamily. Heteromeric odorant receptor channel (TC 1.A.69) family. Or49a subfamily. As to quaternary structure, interacts with Orco. Complexes exist early in the endomembrane system in olfactory sensory neurons (OSNs), coupling these complexes to the conserved ciliary trafficking pathway. As to expression, expressed in olfactory sensory neurons in the antenna.

It is found in the cell membrane. Odorant receptor which mediates acceptance or avoidance behavior, depending on its substrates. The odorant receptor repertoire encodes a large collection of odor stimuli that vary widely in identity, intensity, and duration. Forms a complex with Orco to form odorant-sensing units, providing sensitive and prolonged odorant signaling and calcium permeability. Involved in the behavioral responses to benzaldehyde and acetophenone. This chain is Odorant receptor 67a (Or67a), found in Drosophila melanogaster (Fruit fly).